The chain runs to 206 residues: Flavin reductase (NADPH) (206 aa).

Residues Gly-10, Thr-12, Gly-13, Gln-14, Thr-15, Arg-35, Ser-38, and Arg-39 each coordinate NADP(+). Phosphoserine is present on Ser-42. The NADP(+) site is built by Asp-54, Val-55, Leu-75, Gly-76, and Arg-78. The residue at position 82 (Ser-82) is a Phosphoserine. Positions 87, 109, 132, 153, and 154 each coordinate NADP(+). Catalysis depends on Cys-109, which acts as the S-nitroso-cysteine intermediate; for S-nitroso-CoA-dependent nitrosyltransferase activity. Cys-188 (S-nitroso-cysteine intermediate; for S-nitroso-CoA-dependent nitrosyltransferase activity) is an active-site residue.

Belongs to the BLVRB family. In terms of assembly, monomer. Predominantly expressed in liver and erythrocytes. At lower levels in heart, lung, adrenal gland and cerebrum. Expressed in adult red blood cells.

The protein localises to the cytoplasm. The enzyme catalyses reduced riboflavin + NADP(+) = riboflavin + NADPH + 2 H(+). The catalysed reaction is bilirubin IXbeta + NADP(+) = biliverdin IXbeta + NADPH + H(+). It catalyses the reaction FMNH2 + NAD(+) = FMN + NADH + 2 H(+). It carries out the reaction FMNH2 + NADP(+) = FMN + NADPH + 2 H(+). The enzyme catalyses S-nitroso-CoA + L-cysteinyl-[protein] = S-nitroso-L-cysteinyl-[protein] + CoA. The catalysed reaction is L-cysteinyl-[SCAN] + S-nitroso-CoA = S-nitroso-L-cysteinyl-[SCAN] + CoA. It catalyses the reaction S-nitroso-L-cysteinyl-[SCAN] + L-cysteinyl-[protein] = L-cysteinyl-[SCAN] + S-nitroso-L-cysteinyl-[protein]. Its activity is regulated as follows. Mesobiliverdin acts as a competitive inhibitor for flavin reduction, indicating that flavin and tetrapyrrole substrates compete for the same site. Inhibited by a wide range of xanthene-based drugs, such as phloxine B, erythrosin B, tamibarotene, sulfasalazine, olsalazine, febuxostat, ataluren (PTC124) and deferasirox. Functionally, enzyme that can both act as a NAD(P)H-dependent reductase and a S-nitroso-CoA-dependent nitrosyltransferase. Promotes fetal heme degradation during development. Also expressed in adult tissues, where it acts as a regulator of hematopoiesis, intermediary metabolism (glutaminolysis, glycolysis, TCA cycle and pentose phosphate pathway) and insulin signaling. Has a broad specificity oxidoreductase activity by catalyzing the NAD(P)H-dependent reduction of a variety of flavins, such as riboflavin, FAD or FMN, biliverdins, methemoglobin and PQQ (pyrroloquinoline quinone). Contributes to fetal heme catabolism by catalyzing reduction of biliverdin IXbeta into bilirubin IXbeta in the liver. Biliverdin IXbeta, which constitutes the major heme catabolite in the fetus is not present in adult. Does not reduce bilirubin IXalpha. Can also reduce the complexed Fe(3+) iron to Fe(2+) in the presence of FMN and NADPH. Acts as a protein nitrosyltransferase by catalyzing nitrosylation of cysteine residues of target proteins, such as HMOX2, INSR and IRS1. S-nitroso-CoA-dependent nitrosyltransferase activity is mediated via a 'ping-pong' mechanism: BLVRB first associates with both S-nitroso-CoA and protein substrate, nitric oxide group is then transferred from S-nitroso-CoA to Cys-109 and Cys-188 residues of BLVRB and from S-nitroso-BLVRB to the protein substrate. Inhibits insulin signaling by mediating nitrosylation of INSR and IRS1, leading to their inhibition. The sequence is that of Flavin reductase (NADPH) from Homo sapiens (Human).